The chain runs to 273 residues: Shikimate dehydrogenase (NADP(+)) (273 aa).

Shikimate contacts are provided by residues 15-17 and Thr-62; that span reads SQS. The active-site Proton acceptor is Lys-66. Glu-78 lines the NADP(+) pocket. Shikimate-binding residues include Asn-87 and Asp-102. NADP(+) contacts are provided by residues 127–131, 151–156, and Met-215; these read GAGGA and NRTVTK. Tyr-217 is a shikimate binding site. Position 239 (Gly-239) interacts with NADP(+).

It belongs to the shikimate dehydrogenase family. In terms of assembly, homodimer.

The catalysed reaction is shikimate + NADP(+) = 3-dehydroshikimate + NADPH + H(+). Its pathway is metabolic intermediate biosynthesis; chorismate biosynthesis; chorismate from D-erythrose 4-phosphate and phosphoenolpyruvate: step 4/7. Its function is as follows. Involved in the biosynthesis of the chorismate, which leads to the biosynthesis of aromatic amino acids. Catalyzes the reversible NADPH linked reduction of 3-dehydroshikimate (DHSA) to yield shikimate (SA). The sequence is that of Shikimate dehydrogenase (NADP(+)) from Laribacter hongkongensis (strain HLHK9).